A 449-amino-acid chain; its full sequence is Glycine receptor subunit alpha-2 (449 aa).

A signal peptide spans 1–27 (MTRPSVKLLTTLLACLMEMLNFRVSSG). The Extracellular portion of the chain corresponds to 28–255 (KDPDLLSSSS…FHLERQMGYY (228 aa)). Asparagine 70 carries an N-linked (GlcNAc...) asparagine glycan. Positions 97 and 161 each coordinate glycine. A strychnine-binding site is contributed by arginine 97. Cysteines 170 and 184 form a disulfide. The Zn(2+) site is built by glutamate 224 and aspartate 226. A disulfide bridge connects residues cysteine 230 and cysteine 241. Residue threonine 236 participates in glycine binding. Residue histidine 247 participates in Zn(2+) binding. A helical transmembrane segment spans residues 256–276 (LIQMYIPSLLIVILSWVSFWI). At 277–282 (NMDAAP) the chain is on the cytoplasmic side. A helical transmembrane segment spans residues 283-302 (ARVALGITTVLTMTTQSSGS). The Extracellular portion of the chain corresponds to 303-313 (RASLPKVSYVK). A helical transmembrane segment spans residues 314-334 (AIDIWMAVCLLFVFAALLEYA). The Cytoplasmic portion of the chain corresponds to 335–420 (GVNFVSRQQK…RAKRIDTISR (86 aa)). The helical transmembrane segment at 421 to 441 (AAFPLAFLIFNVFYWITYKII) threads the bilayer. The Extracellular segment spans residues 442–449 (RHESARKD).

Belongs to the ligand-gated ion channel (TC 1.A.9) family.

Its subcellular location is the postsynaptic cell membrane. It is found in the synapse. The protein resides in the cell membrane. It localises to the cell projection. The enzyme catalyses chloride(in) = chloride(out). Channel opening is triggered by extracellular glycine. Channel opening is also triggered by taurine and beta-alanine. Inhibited by strychnine. Subunit of heteromeric glycine-gated chloride channels. Plays a role in synaptic plasticity. Contributes to the generation of inhibitory postsynaptic currents, and is involved in the down-regulation of neuronal excitability. This chain is Glycine receptor subunit alpha-2 (glra2), found in Danio rerio (Zebrafish).